We begin with the raw amino-acid sequence, 252 residues long: Mediator of RNA polymerase II transcription subunit 4 (252 aa).

2 coiled-coil regions span residues 5–31 (KKSTKERLESLLDDLEVLSREVIETLA) and 70–112 (KTHQ…QAKE). The interval 213 to 252 (MLPPNHSNEFLMESLGPNKENEEDVEVMSTDSSSSSSDSD) is disordered. Positions 241-252 (STDSSSSSSDSD) are enriched in low complexity.

This sequence belongs to the Mediator complex subunit 4 family. Component of the Mediator complex.

Its subcellular location is the nucleus. Its function is as follows. Component of the Mediator complex, a coactivator involved in the regulated transcription of nearly all RNA polymerase II-dependent genes. Mediator functions as a bridge to convey information from gene-specific regulatory proteins to the basal RNA polymerase II transcription machinery. Mediator is recruited to promoters by direct interactions with regulatory proteins and serves as a scaffold for the assembly of a functional preinitiation complex with RNA polymerase II and the general transcription factors. In Xenopus laevis (African clawed frog), this protein is Mediator of RNA polymerase II transcription subunit 4 (med4).